A 398-amino-acid polypeptide reads, in one-letter code: Lysophospholipid acyltransferase LPEAT1 (398 aa).

Positions 1–24 (MESELKDLNSNSNPPSSKEDRPLL) are disordered. At S28 the chain carries Phosphoserine. A helical membrane pass occupies residues 66 to 86 (LAVALVTLVPLRFLLSMSILL). The tract at residues 158-185 (RDSDMDSNPKTTSTEINQKGEAATEEPE) is disordered. The segment covering 163–174 (DSNPKTTSTEIN) has biased composition (polar residues). The HXXXXD motif signature appears at 194–199 (HVSYLD).

It belongs to the 1-acyl-sn-glycerol-3-phosphate acyltransferase family.

It localises to the endoplasmic reticulum membrane. The catalysed reaction is a 1-acyl-sn-glycero-3-phosphoethanolamine + an acyl-CoA = a 1,2-diacyl-sn-glycero-3-phosphoethanolamine + CoA. It catalyses the reaction a 1-acyl-sn-glycero-3-phosphate + an acyl-CoA = a 1,2-diacyl-sn-glycero-3-phosphate + CoA. It carries out the reaction a 1-acyl-sn-glycero-3-phosphocholine + an acyl-CoA = a 1,2-diacyl-sn-glycero-3-phosphocholine + CoA. The enzyme catalyses a 1-acyl-sn-glycero-3-phospho-L-serine + an acyl-CoA = a 1,2-diacyl-sn-glycero-3-phospho-L-serine + CoA. Its pathway is lipid metabolism; phospholipid metabolism. In terms of biological role, possesses acyl-CoA-dependent lysophospholipid acyltransferase activity with a subset of lysophospholipids as substrates. Exhibits strong acylation activity on lysophosphatidylethanolamine (LPE) and lysophosphatidate (LPA), and lower activity on lysophosphatidylcholine (LPC) and lysophosphatidylserine (LPS). Exhibits acylation activity on both LPE and LPC. Has a preference for 18:1-LPE over 16:0-LPE as acceptor. Palmitoyl-CoA (16:0-CoA) is a better acyl donor than oleoyl-CoA (18:1-CoA). Among several different acyl-CoA species the best acyl donor is palmitoyl-CoA (16:0-CoA). Activity is calcium-independent. Its activity is essential for maintaining adequate levels of phosphatidylethanolamine (PE), LPE and LPC in the cells, which is crucial for plant growth regulation. This is Lysophospholipid acyltransferase LPEAT1 from Arabidopsis thaliana (Mouse-ear cress).